The sequence spans 475 residues: Flavin-dependent monooxygenase (475 aa).

Belongs to the aromatic-ring hydroxylase family. Requires FAD as cofactor.

The protein localises to the cytoplasm. The catalysed reaction is a tetracycline + NADPH + O2 + H(+) = an 11a-hydroxytetracycline + NADP(+) + H2O. It catalyses the reaction tetracycline + NADPH + O2 + H(+) = 11a-hydroxytetracycline + NADP(+) + H2O. Its activity is regulated as follows. Inhibited by anhydrotetracycline. In terms of biological role, an FAD-requiring monooxygenase active on some tetracycline antibiotic derivatives, which leads to their inactivation. Hydroxylates carbon 11a of tetracycline and some analogs. Confers resistance to tetracycline and doxycycline via an oxidoreductase activity; probably monooxygenates the antibiotics. Does not act on tigecycline. The protein is Flavin-dependent monooxygenase of Mycobacteroides abscessus (strain ATCC 19977 / DSM 44196 / CCUG 20993 / CIP 104536 / JCM 13569 / NCTC 13031 / TMC 1543 / L948) (Mycobacterium abscessus).